A 66-amino-acid polypeptide reads, in one-letter code: Type 3 secretion system chaperone YscE (66 aa).

Belongs to the YscE family. As to quaternary structure, component of the heterodimeric YscE-YscG chaperone. The YscE-YscG chaperone forms a stable ternary complex with YscF/SctF. YscE interacts with YscG, but makes very little direct contact with YscF. Homodimer in solution.

Its subcellular location is the cytoplasm. In terms of biological role, chaperone of the type III secretion system (T3SS), also called injectisome, which is used to inject bacterial effector proteins into eukaryotic host cells. Along with YscG, prevents premature polymerization of the YscF/SctF needle protein within the cytoplasm. Is also required for stable expression of cytosolic YscF and for YscF secretion. Likely plays a role in targeting YscF present in the cytosolic YscEFG complex to the T3SS apparatus. Required for Yop secretion. This Yersinia pestis protein is Type 3 secretion system chaperone YscE.